A 188-amino-acid chain; its full sequence is Phospholipase A2 inhibitor 31 kDa subunit (188 aa).

8 disulfide bridges follow: Cys3/Cys27, Cys6/Cys13, Cys20/Cys48, Cys54/Cys75, Cys76/Cys81, Cys99/Cys124, Cys117/Cys146, and Cys150/Cys172. N-linked (GlcNAc...) asparagine glycosylation occurs at Asn157.

This sequence belongs to the CNF-like-inhibitor family. In terms of assembly, heterodimer with phospholipase A2 inhibitor 25 kDa. Post-translationally, N-glycosylated. Expressed by the liver.

Its subcellular location is the secreted. In terms of biological role, inhibits the enzymatic activity of phospholipase A2. The protein is Phospholipase A2 inhibitor 31 kDa subunit of Naja kaouthia (Monocled cobra).